The chain runs to 125 residues: Phosphoribosyl-AMP cyclohydrolase (125 aa).

D74 is a binding site for Mg(2+). C75 is a Zn(2+) binding site. Mg(2+) contacts are provided by D76 and D78. 2 residues coordinate Zn(2+): C92 and C99.

This sequence belongs to the PRA-CH family. Homodimer. Mg(2+) is required as a cofactor. Requires Zn(2+) as cofactor.

The protein resides in the cytoplasm. It carries out the reaction 1-(5-phospho-beta-D-ribosyl)-5'-AMP + H2O = 1-(5-phospho-beta-D-ribosyl)-5-[(5-phospho-beta-D-ribosylamino)methylideneamino]imidazole-4-carboxamide. It participates in amino-acid biosynthesis; L-histidine biosynthesis; L-histidine from 5-phospho-alpha-D-ribose 1-diphosphate: step 3/9. Catalyzes the hydrolysis of the adenine ring of phosphoribosyl-AMP. In Desulforapulum autotrophicum (strain ATCC 43914 / DSM 3382 / VKM B-1955 / HRM2) (Desulfobacterium autotrophicum), this protein is Phosphoribosyl-AMP cyclohydrolase.